The chain runs to 110 residues: Light-harvesting complex-like protein OHP1, chloroplastic (110 aa).

The transit peptide at 1–41 (MSSSPLSSSLFHPLSTLSTHCHGRRQNLCFNRKQQPFVVRA) directs the protein to the chloroplast. The Stromal portion of the chain corresponds to 42–74 (AKLPEGVIVPKAQPKSQPAFLGFTQTAEIWNSR). Residues 75-95 (ACMIGLIGTFIVELILNKGIL) traverse the membrane as a helical segment. Topologically, residues 96–110 (ELIGVEIGKGLDLPL) are lumenal.

It belongs to the ELIP/psbS family. May bind chlorophyll and form dimers in the thylakoid membrane. Component of a high molecular weight complex containing OHP1, OHP2 and HCF244, and PSII core proteins D1/D2, HCF136 and HCF173. Interacts with HCF244. Forms a trimeric complex with OHP2 and HCF244 that mutually stabilizes each subunit. As to expression, mostly expressed in cotyledons and shoot apices.

Its subcellular location is the plastid. It localises to the chloroplast thylakoid membrane. Functionally, may play a photoprotective role in the thylakoid membrane in response to light stress. Involved in photosystems I (PSI) and II (PSII) core proteins function. Forms a trimeric complex with OHP2 and HCF244 that is required to promote PSII core subunit assembly. The trimeric complex forms a transient PSII reaction center-like complex with PsbA, PsbD, PsbE, PsbF and PsbI subunits in thylakoids for early assembly of PSII as well as PSII repair. The trimeric complex is required for the recruitment of ribosomes to the psbA mRNA during PSII biogenesis and repair. Forms a heterodimer with OHP1 that binds chlorophylls and carotenoids, and that may function in the delivery of pigments to the PsbA subunit of PSII. This is Light-harvesting complex-like protein OHP1, chloroplastic from Arabidopsis thaliana (Mouse-ear cress).